The following is a 110-amino-acid chain: Protein RALF-like 19 (110 aa).

An N-terminal signal peptide occupies residues 1 to 23; the sequence is MGIKILLILGLLTLAVVAESANA. Residues 24-58 constitute a propeptide, removed in mature form; it reads TWTLTKSCVNGQGCIGEDGELDYLMDSETNRRQLA. Intrachain disulfides connect Cys-76-Cys-86 and Cys-99-Cys-105.

The protein belongs to the plant rapid alkalinization factor (RALF) family. Post-translationally, proteolytically cleaved, probably by S1P, a subtilisin-like serine protease (subtilase).

It is found in the secreted. In terms of biological role, cell signaling peptide that may regulate plant stress, growth, and development. Mediates a rapid alkalinization of extracellular space by mediating a transient increase in the cytoplasmic Ca(2+) concentration leading to a calcium-dependent signaling events through a cell surface receptor and a concomitant activation of some intracellular mitogen-activated protein kinases. This chain is Protein RALF-like 19 (RALFL19), found in Arabidopsis thaliana (Mouse-ear cress).